The following is a 118-amino-acid chain: Basic phospholipase A2 CM-III (118 aa).

Cystine bridges form between cysteine 11–cysteine 70, cysteine 26–cysteine 117, cysteine 28–cysteine 44, cysteine 43–cysteine 98, cysteine 50–cysteine 91, cysteine 59–cysteine 84, and cysteine 77–cysteine 89. Residues tyrosine 27, glycine 29, and glycine 31 each contribute to the Ca(2+) site. Histidine 47 is a catalytic residue. Aspartate 48 lines the Ca(2+) pocket. Positions 52–69 (EKAGKMGCWPYFTLYKYK) match the Coagulation factor Xa binding motif motif. Aspartate 92 is an active-site residue.

This sequence belongs to the phospholipase A2 family. Group I subfamily. D49 sub-subfamily. Ca(2+) serves as cofactor. In terms of tissue distribution, expressed by the venom gland.

It localises to the secreted. It catalyses the reaction a 1,2-diacyl-sn-glycero-3-phosphocholine + H2O = a 1-acyl-sn-glycero-3-phosphocholine + a fatty acid + H(+). Functionally, snake venom phospholipase A2 (PLA2) that shows several activities. It shows strong anticoagulant activity, probably by binding to coagulation factor Xa (F10) and inhibiting the formation of the prothrombinase complex, shows direct hemolytic action, causes neuromuscular blockade with a gradual contracture and a decreased sensitivity to ACh and KCl, abolishes twitches evoked by indirect stimulation earlier than those by direct stimulation (in the mouse phrenic nerve-diaphragm preparation), and causes myonecrosis when injected intramuscularly. PLA2 catalyzes the calcium-dependent hydrolysis of the 2-acyl groups in 3-sn-phosphoglycerides. In Naja mossambica (Mozambique spitting cobra), this protein is Basic phospholipase A2 CM-III.